The primary structure comprises 88 residues: Mini zinc finger protein 3 (88 aa).

The ZF-HD dimerization-type; degenerate zinc-finger motif lies at 26 to 72 (YVECQKNHAANIGGYAVDGCREFMASGGDDALTCAACGCHRNFHRRE).

Homo- and heterodimers. Interacts with ZHD3, ZHD5, ZHD6, ZHD7, ZHD8, ZHD9, ZHD10 and ZHD13. In terms of tissue distribution, mostly expressed in roots, stems and flowers, present in seedlings and leaves, and weakly observed in inflorescence and siliques.

It localises to the cytoplasm. Inhibits zinc finger homeodomain (ZHD) transcription factors by interacting with them to prevent both their nuclear localization and their DNA-binding properties. Involved in integrating signals from multiple hormones by regulating the expression of specific genes. Promotes the formation of ectopic shoot meristems on leaf margins. In Arabidopsis thaliana (Mouse-ear cress), this protein is Mini zinc finger protein 3 (MIF3).